Here is a 210-residue protein sequence, read N- to C-terminus: Thiamine-phosphate synthase (210 aa).

4-amino-2-methyl-5-(diphosphooxymethyl)pyrimidine contacts are provided by residues 38–42 (QLREK) and Asn70. Residues Asp71 and Asp90 each coordinate Mg(2+). 4-amino-2-methyl-5-(diphosphooxymethyl)pyrimidine is bound at residue Ser109. Residue 139–141 (TPT) participates in 2-[(2R,5Z)-2-carboxy-4-methylthiazol-5(2H)-ylidene]ethyl phosphate binding. A 4-amino-2-methyl-5-(diphosphooxymethyl)pyrimidine-binding site is contributed by Lys142. 2-[(2R,5Z)-2-carboxy-4-methylthiazol-5(2H)-ylidene]ethyl phosphate-binding positions include Gly170 and 190–191 (VS).

It belongs to the thiamine-phosphate synthase family. It depends on Mg(2+) as a cofactor.

It carries out the reaction 2-[(2R,5Z)-2-carboxy-4-methylthiazol-5(2H)-ylidene]ethyl phosphate + 4-amino-2-methyl-5-(diphosphooxymethyl)pyrimidine + 2 H(+) = thiamine phosphate + CO2 + diphosphate. It catalyses the reaction 2-(2-carboxy-4-methylthiazol-5-yl)ethyl phosphate + 4-amino-2-methyl-5-(diphosphooxymethyl)pyrimidine + 2 H(+) = thiamine phosphate + CO2 + diphosphate. The catalysed reaction is 4-methyl-5-(2-phosphooxyethyl)-thiazole + 4-amino-2-methyl-5-(diphosphooxymethyl)pyrimidine + H(+) = thiamine phosphate + diphosphate. It functions in the pathway cofactor biosynthesis; thiamine diphosphate biosynthesis; thiamine phosphate from 4-amino-2-methyl-5-diphosphomethylpyrimidine and 4-methyl-5-(2-phosphoethyl)-thiazole: step 1/1. Functionally, condenses 4-methyl-5-(beta-hydroxyethyl)thiazole monophosphate (THZ-P) and 2-methyl-4-amino-5-hydroxymethyl pyrimidine pyrophosphate (HMP-PP) to form thiamine monophosphate (TMP). In Leptospira biflexa serovar Patoc (strain Patoc 1 / Ames), this protein is Thiamine-phosphate synthase.